Reading from the N-terminus, the 908-residue chain is Protein translocase subunit SecA (908 aa).

Residues Gln87, 105–109 (GEGKT), and Asp512 contribute to the ATP site. Residues 865–908 (GGDDGSDEMMAHTPMIRDGDKVGRNDPCPCGSGRKYKQCHGKLS) form a disordered region. A compositionally biased stretch (basic and acidic residues) spans 879–888 (MIRDGDKVGR). 4 residues coordinate Zn(2+): Cys892, Cys894, Cys903, and His904. Residues 898–908 (RKYKQCHGKLS) show a composition bias toward basic residues.

It belongs to the SecA family. Monomer and homodimer. Part of the essential Sec protein translocation apparatus which comprises SecA, SecYEG and auxiliary proteins SecDF-YajC and YidC. The cofactor is Zn(2+).

The protein localises to the cell inner membrane. Its subcellular location is the cytoplasm. It catalyses the reaction ATP + H2O + cellular proteinSide 1 = ADP + phosphate + cellular proteinSide 2.. Functionally, part of the Sec protein translocase complex. Interacts with the SecYEG preprotein conducting channel. Has a central role in coupling the hydrolysis of ATP to the transfer of proteins into and across the cell membrane, serving both as a receptor for the preprotein-SecB complex and as an ATP-driven molecular motor driving the stepwise translocation of polypeptide chains across the membrane. This Shewanella sp. (strain MR-7) protein is Protein translocase subunit SecA.